Reading from the N-terminus, the 289-residue chain is F-box protein PP2-B15 (289 aa).

Positions 1-43 (MMLPEACVATILSFTTPADTISSAAVSSVFRVAGDSDFVWEKF) constitute an F-box domain.

The sequence is that of F-box protein PP2-B15 (PP2B15) from Arabidopsis thaliana (Mouse-ear cress).